A 351-amino-acid polypeptide reads, in one-letter code: Biotin synthase (351 aa).

One can recognise a Radical SAM core domain in the interval 42–269; that stretch reads NEVQVSTLLS…KSHVRLSAGR (228 aa). The [4Fe-4S] cluster site is built by Cys57, Cys61, and Cys64. Residues Cys101, Cys132, Cys192, and Arg264 each coordinate [2Fe-2S] cluster.

Belongs to the radical SAM superfamily. Biotin synthase family. As to quaternary structure, homodimer. The cofactor is [4Fe-4S] cluster. [2Fe-2S] cluster is required as a cofactor.

It catalyses the reaction (4R,5S)-dethiobiotin + (sulfur carrier)-SH + 2 reduced [2Fe-2S]-[ferredoxin] + 2 S-adenosyl-L-methionine = (sulfur carrier)-H + biotin + 2 5'-deoxyadenosine + 2 L-methionine + 2 oxidized [2Fe-2S]-[ferredoxin]. It functions in the pathway cofactor biosynthesis; biotin biosynthesis; biotin from 7,8-diaminononanoate: step 2/2. In terms of biological role, catalyzes the conversion of dethiobiotin (DTB) to biotin by the insertion of a sulfur atom into dethiobiotin via a radical-based mechanism. This is Biotin synthase from Psychromonas ingrahamii (strain DSM 17664 / CCUG 51855 / 37).